Here is a 164-residue protein sequence, read N- to C-terminus: MLDLLPDLFDHYPSKLTLLPLAFRAFGGKRLFWGEVVTVKCFEDNSKVKEVLAQPGHGKVLIVDGGGSSRRALLGDLIAQSAMDNGWQGVIINGYVRDAARLSSFNLGVYALGAMPMKTEKLDQGQINVPIELGCVTVKPGMMVYVDENGIAISEESLNFAFLN.

Substrate is bound by residues 75–78 and Arg97; that span reads GDLI. Asp98 provides a ligand contact to a divalent metal cation.

This sequence belongs to the class II aldolase/RraA-like family. As to quaternary structure, homotrimer. The cofactor is a divalent metal cation.

The catalysed reaction is 4-hydroxy-4-methyl-2-oxoglutarate = 2 pyruvate. It catalyses the reaction oxaloacetate + H(+) = pyruvate + CO2. In terms of biological role, catalyzes the aldol cleavage of 4-hydroxy-4-methyl-2-oxoglutarate (HMG) into 2 molecules of pyruvate. Also contains a secondary oxaloacetate (OAA) decarboxylase activity due to the common pyruvate enolate transition state formed following C-C bond cleavage in the retro-aldol and decarboxylation reactions. The protein is Putative 4-hydroxy-4-methyl-2-oxoglutarate aldolase of Shewanella oneidensis (strain ATCC 700550 / JCM 31522 / CIP 106686 / LMG 19005 / NCIMB 14063 / MR-1).